The primary structure comprises 1716 residues: DNA-directed RNA polymerase I subunit RPA1 (1716 aa).

Cys64, Cys67, Cys74, His77, Cys104, and Cys107 together coordinate Zn(2+). Positions 110–201 (LTCPRAAIHL…VAHFWKTHMA (92 aa)) are clamp. 2 residues coordinate Zn(2+): Cys205 and Cys208. The tract at residues 327–433 (FTNGQTVNLQ…IRQILEKKEG (107 aa)) is clamp. The rudder stretch occupies residues 410–423 (DSDMDKLMLEKYPG). Residues Lys431, Arg436, and Arg443 each contribute to the DNA site. The interval 475 to 549 (YPQPVTPWNV…QGAKVVCRHV (75 aa)) is involved in RRN3 binding to Pol I complex. Arg559 contributes to the RNA binding site. Residues Asp595, Asp597, and Asp599 each contribute to the Mg(2+) site. Asp599 provides a ligand contact to RNA. The funnel stretch occupies residues 812 to 890 (KPNADVMRQR…NEINKACMPF (79 aa)). Residues 967-1008 (RPPEFFFHCMAGREGLVDTAVKTSRSGYLQRCIIKHLEGLVI) form a bridging helix region. Residues 1067–1162 (ADPQKVLRHF…SLSVWRPDIH (96 aa)) form a mediates the interaction with TOP2A region. A trigger loop region spans residues 1214 to 1255 (PGEAVGLLAAQSIGEPSTQMTLNTFHFAGRGEMNVTLGIPRL). DNA is bound at residue Arg1256. Residues 1368–1493 (ASAFRSVNTR…RHSRPQGAEA (126 aa)) are disordered. Positions 1380 to 1397 (TQKDLDDTEDSGRNRREE) are enriched in basic and acidic residues. Composition is skewed to acidic residues over residues 1398 to 1419 (ERDE…DADA) and 1429 to 1451 (EEEV…VQEE). A compositionally biased stretch (basic and acidic residues) spans 1452-1464 (ENIKGEGAHQTHE). The span at 1465-1477 (PDEEEGSGLEEES) shows a compositional bias: acidic residues.

This sequence belongs to the RNA polymerase beta' chain family. Component of the RNA polymerase I (Pol I) complex consisting of 13 subunits: a ten-subunit catalytic core composed of POLR1A/RPA1, POLR1B/RPA2, POLR1C/RPAC1, POLR1D/RPAC2, POLR1H/RPA12, POLR2E/RPABC1, POLR2F/RPABC2, POLR2H/RPABC3, POLR2K/RPABC4 and POLR2L/RPABC5; a mobile stalk subunit POLR1F/RPA43 protruding from the core and additional subunits homologous to general transcription factors POLR1E/RPA49 and POLR1G/RPA34. Part of Pol I pre-initiation complex (PIC), in which Pol I core assembles with RRN3 and promoter-bound UTBF and SL1/TIF-IB complex. Interacts (via dock II domain) with TOP2A; this interaction may assist Pol I transcription initiation by releasing supercoils occurring during DNA unwinding. Interacts with CAVIN1; this interaction induces the dissociation of Pol I complex paused at rDNA terminator sequences. Interacts with MYO1C. Interacts with ERBB2. Interacts with DDX11. Interacts with RECQL5. It depends on Mg(2+) as a cofactor. Post-translationally, phosphorylated.

Its subcellular location is the nucleus. The protein localises to the nucleolus. It localises to the chromosome. It catalyses the reaction RNA(n) + a ribonucleoside 5'-triphosphate = RNA(n+1) + diphosphate. Catalytic core component of RNA polymerase I (Pol I), a DNA-dependent RNA polymerase which synthesizes ribosomal RNA precursors using the four ribonucleoside triphosphates as substrates. Transcribes 47S pre-rRNAs from multicopy rRNA gene clusters, giving rise to 5.8S, 18S and 28S ribosomal RNAs. Pol I-mediated transcription cycle proceeds through transcription initiation, transcription elongation and transcription termination stages. During transcription initiation, Pol I pre-initiation complex (PIC) is recruited by the selectivity factor 1 (SL1/TIF-IB) complex bound to the core promoter that precedes an rDNA repeat unit. The PIC assembly bends the promoter favoring the formation of the transcription bubble and promoter escape. Once the polymerase has escaped from the promoter it enters the elongation phase during which RNA is actively polymerized, based on complementarity with the template DNA strand. Highly processive, assembles in structures referred to as 'Miller trees' where many elongating Pol I complexes queue and transcribe the same rDNA coding regions. At terminator sequences downstream of the rDNA gene, PTRF interacts with Pol I and halts Pol I transcription leading to the release of the RNA transcript and polymerase from the DNA. Forms Pol I active center together with the second largest subunit POLR1B/RPA2. Appends one nucleotide at a time to the 3' end of the nascent RNA, with POLR1A/RPA1 contributing a Mg(2+)-coordinating DxDGD motif, and POLR1B/RPA2 participating in the coordination of a second Mg(2+) ion and providing lysine residues believed to facilitate Watson-Crick base pairing between the incoming nucleotide and the template base. Typically, Mg(2+) ions direct a 5' nucleoside triphosphate to form a phosphodiester bond with the 3' hydroxyl of the preceding nucleotide of the nascent RNA, with the elimination of pyrophosphate. Has proofreading activity: Pauses and backtracks to allow the cleavage of a missincorporated nucleotide via POLR1H/RPA12. High Pol I processivity is associated with decreased transcription fidelity. This is DNA-directed RNA polymerase I subunit RPA1 from Rattus norvegicus (Rat).